The sequence spans 2313 residues: Voltage-dependent R-type calcium channel subunit alpha-1E (2313 aa).

A disordered region spans residues Met1 to Ala38. Residues Met1 to Pro89 are Cytoplasmic-facing. Phosphoserine is present on residues Ser14 and Ser19. One copy of the I repeat lies at Asn76–Phe354. The chain crosses the membrane as a helical span at residues Pro90–Leu108. Topologically, residues Glu109–Thr127 are extracellular. The chain crosses the membrane as a helical span at residues Glu128–Leu146. The Cytoplasmic segment spans residues Gly147 to Asn158. Residues Gly159–Leu173 form a helical membrane-spanning segment. Residues Ala174–Asp185 are Extracellular-facing. The chain crosses the membrane as a helical span at residues Leu186–Pro205. The Cytoplasmic segment spans residues Ser206 to Gln223. Residues Ile224–Ser244 form a helical membrane-spanning segment. Over Gly245–Trp326 the chain is Extracellular. N-linked (GlcNAc...) asparagine glycosylation occurs at Asn254. Residues Asn327–Leu350 form a helical membrane-spanning segment. At Ser351 to Gln476 the chain is on the cytoplasmic side. The segment at Gln374–Glu391 is binding to the beta subunit. Asp426 is a Ca(2+) binding site. Position 427 is a phosphoserine (Ser427). 3 residues coordinate Ca(2+): Ser428, Glu430, and Cys432. Thr440 is subject to Phosphothreonine. The II repeat unit spans residues Glu462–Leu706. Residues Val477–Val496 traverse the membrane as a helical segment. Residues His497–Tyr509 lie on the Extracellular side of the membrane. A helical membrane pass occupies residues Tyr510–Gly529. The Cytoplasmic portion of the chain corresponds to Met530–Ser538. The helical transmembrane segment at Ser539–Trp557 threads the bilayer. At Ala558–Gly567 the chain is on the extracellular side. The helical transmembrane segment at Ile568–Trp586 threads the bilayer. Topologically, residues Ala587–Ser605 are cytoplasmic. Residues Leu606–Phe625 traverse the membrane as a helical segment. Over Gly626–Trp678 the chain is Extracellular. A helical membrane pass occupies residues Ser679–Val703. Topologically, residues Asp704–Tyr1148 are cytoplasmic. Residues Leu729–His774 form a disordered region. Phosphoserine occurs at positions 736, 745, 793, 815, and 855. The tract at residues Ser851–Thr984 is disordered. Polar residues predominate over residues Ala866–Ser875. Over residues Arg913–Val926 the composition is skewed to basic residues. The segment covering Ser933–Glu945 has biased composition (low complexity). Phosphoserine is present on Ser947. The span at Glu955–Arg983 shows a compositional bias: basic and acidic residues. A Phosphoserine modification is found at Ser1097. The tract at residues Glu1103 to Lys1125 is disordered. The III repeat unit spans residues Asn1140–Phe1426. Residues Ile1149–Ala1165 form a helical membrane-spanning segment. The Extracellular portion of the chain corresponds to Ser1166 to Phe1189. A helical membrane pass occupies residues Asp1190–Gly1209. The Cytoplasmic segment spans residues Leu1210–Tyr1217. Residues Phe1218–Ala1240 traverse the membrane as a helical segment. Residues Asn1241–Ile1254 are Extracellular-facing. The chain crosses the membrane as a helical span at residues Lys1255–Leu1272. The Cytoplasmic portion of the chain corresponds to Pro1273–Asn1291. A helical membrane pass occupies residues Ile1292 to Phe1311. The Extracellular portion of the chain corresponds to Lys1312 to Glu1398. A helical transmembrane segment spans residues Met1399–Ile1422. Residues Ile1423–Ser1479 are Cytoplasmic-facing. The IV repeat unit spans residues Asn1463–Phe1726. Residues Phe1480–Lys1498 form a helical membrane-spanning segment. Residues Tyr1499–Leu1513 are Extracellular-facing. Residues Asn1514–Gly1533 traverse the membrane as a helical segment. At Phe1534–Thr1541 the chain is on the cytoplasmic side. A helical transmembrane segment spans residues Trp1542–Thr1560. The Extracellular segment spans residues Asp1561–Asn1571. N-linked (GlcNAc...) asparagine glycans are attached at residues Asn1566 and Asn1571. The chain crosses the membrane as a helical span at residues Met1572–Gly1590. The Cytoplasmic segment spans residues Tyr1591–Tyr1609. A helical membrane pass occupies residues Val1610–Phe1629. Topologically, residues Gly1630–Leu1698 are extracellular. A helical transmembrane segment spans residues Ala1699–Asp1724. Residues Asn1725–Cys2313 are Cytoplasmic-facing. In terms of domain architecture, EF-hand spans His1739–Pro1774. The Ca(2+) site is built by Asp1752, Arg1758, and Glu1763. Disordered regions lie at residues Val1970–Leu2170, Cys2206–Gln2225, and Ser2263–Met2295. Residues Thr2012–Thr2023 show a composition bias toward polar residues. A compositionally biased stretch (low complexity) spans His2055–Arg2064. A compositionally biased stretch (basic and acidic residues) spans Leu2065–Arg2085. A phosphoserine mark is found at Ser2094 and Ser2113. Positions Asn2101 to Gln2118 are enriched in basic and acidic residues. A compositionally biased stretch (polar residues) spans Thr2129–Pro2152. Residues Ser2210–Gln2225 show a composition bias toward low complexity.

The protein belongs to the calcium channel alpha-1 subunit (TC 1.A.1.11) family. CACNA1E subfamily. In terms of assembly, interacts with EFHC1. Voltage-dependent calcium channels are multisubunit complexes, consisting of alpha-1, alpha-2, beta and delta subunits in a 1:1:1:1 ratio. The channel activity is directed by the pore-forming and voltage-sensitive alpha-1 subunit. In many cases, this subunit is sufficient to generate voltage-sensitive calcium channel activity. The auxiliary subunits beta and alpha-2/delta linked by a disulfide bridge regulate the channel activity. Expressed in neuronal tissues and in kidney.

It localises to the membrane. It carries out the reaction Ca(2+)(in) = Ca(2+)(out). In terms of biological role, voltage-sensitive calcium channels (VSCC) mediate the entry of calcium ions into excitable cells. They are also involved in a variety of calcium-dependent processes, including muscle contraction, hormone or neurotransmitter release, gene expression, cell motility, cell division and cell death. The isoform alpha-1E gives rise to R-type calcium currents. R-type calcium channels belong to the 'high-voltage activated' (HVA) group and are blocked by nickel. They are however insensitive to dihydropyridines (DHP). Calcium channels containing alpha-1E subunit could be involved in the modulation of firing patterns of neurons which is important for information processing. Voltage-sensitive calcium channels (VSCC) mediate the entry of calcium ions into excitable cells. They are also involved in a variety of calcium-dependent processes, including muscle contraction, hormone or neurotransmitter release, gene expression, cell motility, cell division and cell death. The isoform alpha-1E gives rise to R-type calcium currents. The chain is Voltage-dependent R-type calcium channel subunit alpha-1E (CACNA1E) from Homo sapiens (Human).